Here is a 131-residue protein sequence, read N- to C-terminus: Neurophysin 2 (131 aa).

7 disulfides stabilise this stretch: Cys10/Cys55, Cys13/Cys27, Cys21/Cys45, Cys28/Cys35, Cys62/Cys74, Cys68/Cys86, and Cys75/Cys80.

It belongs to the vasopressin/oxytocin family.

Its subcellular location is the secreted. In terms of biological role, neurophysin 2 specifically binds vasopressin. This chain is Neurophysin 2, found in Anser anser anser (Western greylag goose).